We begin with the raw amino-acid sequence, 415 residues long: Multidrug resistance protein MdtA (415 aa).

Positions 1–21 (MKGSYKSRWVIVIVVVIAAIA) are cleaved as a signal peptide. A compositionally biased stretch (polar residues) spans 31–46 (DSQSAAPGATKQAQQS). Disordered stretches follow at residues 31–56 (DSQS…GMRA) and 392–415 (EAQS…GARS). Basic and acidic residues predominate over residues 399 to 415 (PEEKATSREYAKKGARS).

Belongs to the membrane fusion protein (MFP) (TC 8.A.1) family. As to quaternary structure, part of a tripartite efflux system composed of MdtA, MdtB and MdtC.

It is found in the cell inner membrane. In terms of biological role, the MdtABC tripartite complex confers resistance against novobiocin and deoxycholate. The chain is Multidrug resistance protein MdtA from Escherichia coli O6:K15:H31 (strain 536 / UPEC).